Here is a 315-residue protein sequence, read N- to C-terminus: GPN-loop GTPase 2 (315 aa).

12 to 17 (GSGKST) is a binding site for GTP. Residues 69–71 (GPN) carry the Gly-Pro-Asn (GPN)-loop; involved in dimer interface motif. 172-175 (SKAD) provides a ligand contact to GTP.

The protein belongs to the GPN-loop GTPase family. As to quaternary structure, heterodimers with gpn1 or fet5/gpn3. Binds to RNA polymerase II (RNAPII).

It localises to the cytoplasm. It is found in the nucleus. Functionally, small GTPase required for proper nuclear import of RNA polymerase II and III (RNAPII and RNAPIII). May act at an RNAP assembly step prior to nuclear import. This Schizosaccharomyces pombe (strain 972 / ATCC 24843) (Fission yeast) protein is GPN-loop GTPase 2.